The primary structure comprises 168 residues: HTH-type transcriptional regulator IscR (168 aa).

Residues 2–131 (KLTSKGRYAV…NNITLGELMT (130 aa)) form the HTH rrf2-type domain. Positions 28-51 (LADISERQGISLSYLEQLFSKLRK) form a DNA-binding region, H-T-H motif. Residues C92, C98, and C104 each contribute to the [2Fe-2S] cluster site.

It depends on [2Fe-2S] cluster as a cofactor.

Functionally, regulates the transcription of several operons and genes involved in the biogenesis of Fe-S clusters and Fe-S-containing proteins. The chain is HTH-type transcriptional regulator IscR from Vibrio parahaemolyticus serotype O3:K6 (strain RIMD 2210633).